We begin with the raw amino-acid sequence, 315 residues long: Cobalamin biosynthesis protein CobD (315 aa).

The next 5 helical transmembrane spans lie at 54 to 74, 78 to 98, 152 to 172, 203 to 223, and 295 to 315; these read GLLFVLTVGMTGVVSWFILFL, IAYWLYVAVFVYLGYTTLAMT, ADGVIAPLFYLFIGGPVLALM, IANFIPARLAWFFLVIASFIL, and LLYTASTIAFIIFASIYLLLF.

It belongs to the CobD/CbiB family.

The protein resides in the cell membrane. It functions in the pathway cofactor biosynthesis; adenosylcobalamin biosynthesis. In terms of biological role, converts cobyric acid to cobinamide by the addition of aminopropanol on the F carboxylic group. The chain is Cobalamin biosynthesis protein CobD from Listeria monocytogenes serotype 4b (strain F2365).